The following is a 194-amino-acid chain: Anaphase-promoting complex subunit CDC26 (194 aa).

The segment at 47–194 (EPMDQSEPPR…PSSNTRSHRH (148 aa)) is disordered. 2 stretches are compositionally biased toward polar residues: residues 79-94 (GECT…TSAR) and 102-112 (LTLSTPVNPVS). Low complexity-rich tracts occupy residues 154 to 166 (DESP…PESP) and 174 to 194 (TPGN…SHRH).

It belongs to the CDC26 family. As to quaternary structure, the APC/C complex is probably composed of at least 12 subunits: apc-2, apc-10, apc-11, cdc-26, emb-1, emb-27, emb-30, mat-1, mat-2, mat-3, such-1 and gfi-3.

Its subcellular location is the nucleus. It participates in protein modification; protein ubiquitination. In terms of biological role, probable component of the anaphase promoting complex/cyclosome (APC/C), a cell cycle-regulated E3 ubiquitin ligase that controls progression through mitosis and the G1 phase of the cell cycle. The APC/C complex acts by mediating ubiquitination and subsequent degradation of target proteins. Developmental role in early embryogenesis and the metaphase to anaphase transition in meiosis and mitosis. Required for embryonic anterior-posterior axis formation. In Caenorhabditis elegans, this protein is Anaphase-promoting complex subunit CDC26.